We begin with the raw amino-acid sequence, 217 residues long: MOB kinase activator 3A (217 aa).

Zn(2+)-binding residues include C83, C88, H165, and H170.

Belongs to the MOB1/phocein family.

Its function is as follows. May regulate the activity of kinases. This chain is MOB kinase activator 3A (Mob3a), found in Mus musculus (Mouse).